The primary structure comprises 603 residues: MGRKSAILAVILAIIYFRSNFSKMSNTPVQETEGPVYVAYSMEDMLKSPRDLYKSVKEVAKFVNSAEGKSMSARFKKFGTPREAMDFLAYGDAPTTPKTVPPVAPTEPNSPFSGVNRIQMNEFKKYVEKGDMENFLRLVDSNPRFLVNTGGDVASIVMEGFRYNALHIAAKAGQTEIIAKILELIQNIDFLIRLYGTGADDVTLRKINILDSYLNTPDKGNSDTPLHFASKFGKIGVVRVLTENSATDRTLLNKSGKSALDCAGERYTGEDKDMVQRDIHLAIEGFYVFLHRNPTTGSTQLTVSQKPPATYSTSPTTATVTVSAQAGPFFTEREARDFAKSWQTAGKELKRTDFDKGWERVGRVLAEQSEAMWRETWHFLGSMELLDLGSEQGLGVLEAFLREKRRGNLRNSEISEISTKKSIFRRGIHARKLDFGILDGEKSAEISENLTPDGSDSADDEDDDDIFYDTFSEIPAAAEKSINDPDDTLGSLTDRFAAISIFSPLPPPPPPQWSNSPNFDYSEGEDSFATPPTTPPPTFVADDEPCKIDNDLFEVLAQISSELISKFPLTQDYVQKLGKLTAHDRSTWRPIDSPARCDSRRKI.

The chain crosses the membrane as a helical; Signal-anchor for type III membrane protein span at residues 2 to 22 (GRKSAILAVILAIIYFRSNFS). ANK repeat units follow at residues 161–190 (FRYN…NIDF) and 221–250 (NSDT…TDRT). Disordered stretches follow at residues 446–465 (ISEN…DDDD) and 505–538 (LPPP…PPPT). Residues 456 to 465 (DSADDEDDDD) show a composition bias toward acidic residues.

This sequence belongs to the ANKLE2 family. In terms of assembly, interacts with baf-1. Interacts with protein phosphatase 2A (PP2A) components.

It localises to the nucleus membrane. In terms of biological role, involved in mitotic nuclear envelope reassembly by promoting dephosphorylation of baf-1 during mitotic exit. Coordinates the control of baf-1 dephosphorylation by inhibiting VRK1 kinase and promoting dephosphorylation of baf-1 by protein phosphatase 2A (PP2A), thereby facilitating nuclear envelope assembly. It is unclear whether it acts as a real PP2A regulatory subunit or whether it is involved in recruitment of the PP2A complex. This Caenorhabditis elegans protein is Ankyrin repeat and LEM domain-containing protein 2 homolog (lem-4).